Reading from the N-terminus, the 182-residue chain is NADH-quinone oxidoreductase subunit I (182 aa).

2 4Fe-4S ferredoxin-type domains span residues 52 to 82 (LTRDPDGEERCVACNLCAVACPVGCISLQKA) and 92 to 121 (EFFRINFSRCIFCGLCEEACPTTAIQLTPD). Residues cysteine 62, cysteine 65, cysteine 68, cysteine 72, cysteine 101, cysteine 104, cysteine 107, and cysteine 111 each coordinate [4Fe-4S] cluster.

This sequence belongs to the complex I 23 kDa subunit family. NDH-1 is composed of 13 different subunits. Subunits NuoA, H, J, K, L, M, N constitute the membrane sector of the complex. The cofactor is [4Fe-4S] cluster.

It localises to the cell inner membrane. It carries out the reaction a quinone + NADH + 5 H(+)(in) = a quinol + NAD(+) + 4 H(+)(out). In terms of biological role, NDH-1 shuttles electrons from NADH, via FMN and iron-sulfur (Fe-S) centers, to quinones in the respiratory chain. The immediate electron acceptor for the enzyme in this species is believed to be ubiquinone. Couples the redox reaction to proton translocation (for every two electrons transferred, four hydrogen ions are translocated across the cytoplasmic membrane), and thus conserves the redox energy in a proton gradient. In Pseudomonas entomophila (strain L48), this protein is NADH-quinone oxidoreductase subunit I.